An 856-amino-acid chain; its full sequence is Lon protease (856 aa).

The Lon N-terminal domain occupies 68 to 261 (FPVLPLRDIV…KVLGLMESEI (194 aa)). Residue 412 to 419 (GPPGVGKT) participates in ATP binding. One can recognise a Lon proteolytic domain in the interval 647-828 (EDQVGVVTGL…DEVLHHALLR (182 aa)). Residues serine 734 and lysine 777 contribute to the active site.

The protein belongs to the peptidase S16 family. As to quaternary structure, homohexamer. Organized in a ring with a central cavity.

The protein resides in the cytoplasm. The enzyme catalyses Hydrolysis of proteins in presence of ATP.. ATP-dependent serine protease that mediates the selective degradation of mutant and abnormal proteins as well as certain short-lived regulatory proteins. Required for cellular homeostasis and for survival from DNA damage and developmental changes induced by stress. Degrades polypeptides processively to yield small peptide fragments that are 5 to 10 amino acids long. Binds to DNA in a double-stranded, site-specific manner. The sequence is that of Lon protease from Azorhizobium caulinodans (strain ATCC 43989 / DSM 5975 / JCM 20966 / LMG 6465 / NBRC 14845 / NCIMB 13405 / ORS 571).